We begin with the raw amino-acid sequence, 628 residues long: F-box only protein 21 (628 aa).

Positions 28-84 constitute an F-box domain; it reads SCLVNLPGEVLEYILCCGSLTAADIGRVSSTCRRLRELCQSSGKVWKEQFRVRWPSL.

In terms of assembly, directly interacts with SKP1 and CUL1.

Its function is as follows. Substrate-recognition component of the SCF (SKP1-CUL1-F-box protein)-type E3 ubiquitin ligase complex. This Homo sapiens (Human) protein is F-box only protein 21 (FBXO21).